We begin with the raw amino-acid sequence, 611 residues long: MSIHIVALGNEGDTFHQDNRPSGLIRTYLGRSPLVSGDESSLLLNAASTVARPVFTEYQASAFGNVKLVVHDCPVWDIFDSDWYTSRNLIGGADIIVIKYNVNDKFSFHEVKDNYIPVIKRASNSVPVIIAAVGTRQNEELPCTCPLCTSDRGSCVTTTEGIQLAKELGATYLELHSLDDFYIGKYFGGVLEYFMIQALNQKTSEKMKKRKMTSSFHGIRPPQLEQPEKMPVLKAEASHYHSDLNNLLLCCQCVDVVFYHPEVTGVVEAHKIVLCSVSHVFMLLFNVKSPADIQDSSIIRTTQDLFAINRDAVLPGASQEAPSNPPLPVIVKDALFCSCLSDILRFIYSGAFQWEELEEDVRRKLKDSGDVSDIIEKVKCILKTPGKINCLRNCKTYQARKPLWFYNTSLKFFLNKPMLADVVFEIQGATVPAHRAILVARCEVMAAMFNGNYMEAKSVLIPVYGVSKETFLSFLEYLYTDSCCPAGIFQAMCLLICAEMYQVSRLQHICELFIITQLQSMPSRELASMNLDIVDLLKKAKFHHSDCLSTWLLHFIATNYLIFSQKPEFQDLSVEERSFVEKHRWPSNMYLKQLAEYRKYIHSRKCRCLVM.

The interval 1–175 (MSIHIVALGN…KELGATYLEL (175 aa)) is rho-like. BTB domains are found at residues 254 to 356 (VDVV…QWEE) and 420 to 487 (ADVV…CPAG). The interval 420 to 611 (ADVVFEIQGA…HSRKCRCLVM (192 aa)) is interaction with Rab9.

In terms of assembly, interacts with RAB9A and RAB9B (at lower level compared to RAB9A-binding). Interacts with M6PRBP1/TIP47.

It is found in the golgi apparatus. In terms of biological role, rab9-regulated ATPase required for endosome to Golgi transport. Involved in transport vesicle docking at the Golgi complex, possibly by participating in release M6PRBP1/TIP47 from vesicles to permit their efficient docking and fusion at the Golgi. Specifically binds Rab9, but not other Rab proteins. Has low intrinsic ATPase activity due to autoinhibition, which is relieved by Rab9. The polypeptide is Rho-related BTB domain-containing protein 3 (Rhobtb3) (Mus musculus (Mouse)).